Consider the following 438-residue polypeptide: Histidine--tRNA ligase (438 aa).

It belongs to the class-II aminoacyl-tRNA synthetase family. In terms of assembly, homodimer.

The protein resides in the cytoplasm. It catalyses the reaction tRNA(His) + L-histidine + ATP = L-histidyl-tRNA(His) + AMP + diphosphate + H(+). This chain is Histidine--tRNA ligase, found in Blochmanniella pennsylvanica (strain BPEN).